Consider the following 210-residue polypeptide: Chorismate pyruvate-lyase (210 aa).

The protein belongs to the chorismate pyruvate-lyase type 2 family.

It carries out the reaction chorismate = 4-hydroxybenzoate + pyruvate. Removes the pyruvyl group from chorismate to provide 4-hydroxybenzoate (4HB). Involved in the synthesis of glycosylated p-hydroxybenzoic acid methyl esters (p-HBADs) and phenolic glycolipids (PGL) that play important roles in the pathogenesis of mycobacterial infections. The protein is Chorismate pyruvate-lyase of Mycobacterium leprae (strain TN).